Consider the following 227-residue polypeptide: MYISSPHTSHFTSIDRSPAVVSESDRSMEEAAAAADMNGGVHQSRFRRVCVFCGSSSGKRRSYRDAAVELGKELVARKVDLVYGGGSLGLMGEVAEAVRNGGGHVIGVIPTTLMGKEVTGETVGEVREVGSMHERKAEMARRSDAFVALPGGYGTLEEVVEVIAWAQLGIHAKPVGLLNVDGYYDFLLAFVDKAVADGFIPPSHRHLFVSAPDAPSLVHKLEEYVPV.

Residues Met1–Asp15 show a composition bias toward polar residues. Residues Met1–Arg26 form a disordered region. Substrate is bound by residues Glu117, Arg135–Lys136, and Gly152–Glu158.

The protein belongs to the LOG family. As to expression, expressed in roots, leaves and stems.

It catalyses the reaction N(6)-(dimethylallyl)adenosine 5'-phosphate + H2O = N(6)-dimethylallyladenine + D-ribose 5-phosphate. The enzyme catalyses 9-ribosyl-trans-zeatin 5'-phosphate + H2O = trans-zeatin + D-ribose 5-phosphate. Its function is as follows. Cytokinin-activating enzyme working in the direct activation pathway. Phosphoribohydrolase that converts inactive cytokinin nucleotides to the biologically active free-base forms. In Oryza sativa subsp. japonica (Rice), this protein is Probable cytokinin riboside 5'-monophosphate phosphoribohydrolase LOGL9 (LOGL9).